Reading from the N-terminus, the 277-residue chain is Isoprenyl transferase 1 (277 aa).

A disordered region spans residues 1-30 (MAVRGILGRQRREYRTPEPHPSGARPPKLG). D42 is an active-site residue. D42 contacts Mg(2+). Substrate is bound by residues 43–46 (GNGR), W47, R55, H59, and 87–89 (STE). N90 serves as the catalytic Proton acceptor. Substrate contacts are provided by residues W91, R93, R210, and 216 to 218 (RTS). E229 contacts Mg(2+).

It belongs to the UPP synthase family. Homodimer. Mg(2+) is required as a cofactor.

Functionally, catalyzes the condensation of isopentenyl diphosphate (IPP) with allylic pyrophosphates generating different type of terpenoids. The sequence is that of Isoprenyl transferase 1 from Streptomyces coelicolor (strain ATCC BAA-471 / A3(2) / M145).